Here is a 375-residue protein sequence, read N- to C-terminus: DNA replication and repair protein RecF (375 aa).

34–41 (GDNGAGKT) lines the ATP pocket.

Belongs to the RecF family.

The protein localises to the cytoplasm. In terms of biological role, the RecF protein is involved in DNA metabolism; it is required for DNA replication and normal SOS inducibility. RecF binds preferentially to single-stranded, linear DNA. It also seems to bind ATP. This is DNA replication and repair protein RecF from Rhizobium rhizogenes (strain K84 / ATCC BAA-868) (Agrobacterium radiobacter).